A 72-amino-acid chain; its full sequence is Translation initiation factor IF-1 (72 aa).

In terms of domain architecture, S1-like spans 1–72; that stretch reads MSKQTAIEQD…TKGRISFRYK (72 aa).

This sequence belongs to the IF-1 family. As to quaternary structure, component of the 30S ribosomal translation pre-initiation complex which assembles on the 30S ribosome in the order IF-2 and IF-3, IF-1 and N-formylmethionyl-tRNA(fMet); mRNA recruitment can occur at any time during PIC assembly.

It localises to the cytoplasm. Functionally, one of the essential components for the initiation of protein synthesis. Stabilizes the binding of IF-2 and IF-3 on the 30S subunit to which N-formylmethionyl-tRNA(fMet) subsequently binds. Helps modulate mRNA selection, yielding the 30S pre-initiation complex (PIC). Upon addition of the 50S ribosomal subunit IF-1, IF-2 and IF-3 are released leaving the mature 70S translation initiation complex. The sequence is that of Translation initiation factor IF-1 from Porphyromonas gingivalis (strain ATCC BAA-308 / W83).